A 426-amino-acid chain; its full sequence is DNA polymerase processivity factor component OPG148 (426 aa).

The protein belongs to the orthopoxvirus OPG148 family. As to quaternary structure, interacts with the DNA polymerase catalytic subunit OPG071. Interacts with UDG/OPG116. Component of the uracil-DNA glycosylase(UDG)-OPG148-polymerase complex; OPG148 and UDG form a heterodimeric processivity factor that associates with OPG071 to form the processive polymerase holoenzyme. Interacts with OPG117.

Functionally, plays an essential role in viral DNA replication by acting as the polymerase processivity factor together with protein OPG116. Serves as a bridge which links the DNA polymerase OPG071 and the uracil DNA glycosylase. The chain is DNA polymerase processivity factor component OPG148 (OPG148) from Cynomys gunnisoni (Gunnison's prairie dog).